The following is a 689-amino-acid chain: FACT complex subunit ssrp1-B (689 aa).

2 disordered regions span residues Asp434 to Thr565 and Lys592 to Asp689. Acidic residues predominate over residues Glu461–Leu477. Composition is skewed to basic and acidic residues over residues Asp478–Ser491, Ile523–Glu532, Glu538–Arg563, and Ser601–Lys628. A DNA-binding region (HMG box) is located at residues Pro561–Lys627. Residues Gly638–Gly650 are compositionally biased toward polar residues.

This sequence belongs to the SSRP1 family. Component of the FACT complex, a stable heterodimer of hmg-3 and spt-16. The FACT complex may also include hmg-4 instead of hmg-3. Expressed in the germline.

The protein resides in the nucleus. Its subcellular location is the chromosome. Functionally, component of the FACT complex, a general chromatin factor that acts to reorganize nucleosomes. The FACT complex is involved in multiple processes that require DNA as a template such as mRNA elongation, DNA replication and DNA repair. During transcription elongation the FACT complex acts as a histone chaperone that both destabilizes and restores nucleosomal structure. It facilitates the passage of RNA polymerase II and transcription by promoting the dissociation of one histone H2A-H2B dimer from the nucleosome, then subsequently promotes the reestablishment of the nucleosome following the passage of RNA polymerase II. Binds specifically to double-stranded DNA. In embryos, may function redundantly with hmg-4 to promote cell cycle progression and development of the anterior pharynx. In the germline, acts non-redundantly with hmg-4 to play a role in oocyte development. This is FACT complex subunit ssrp1-B from Caenorhabditis elegans.